Consider the following 145-residue polypeptide: Transthyretin (145 aa).

The N-terminal stretch at 1–20 is a signal peptide; it reads MASHRLFLLCLAGLVFMSEA. Position 28 is a sulfocysteine (cysteine 28). An L-thyroxine-binding site is contributed by lysine 33. Glutamate 60 bears the 4-carboxyglutamate mark. The residue at position 70 (serine 70) is a Phosphoserine. Glutamate 72 provides a ligand contact to L-thyroxine. N-linked (GlcNAc...) asparagine glycosylation is present at asparagine 116. Serine 135 contributes to the L-thyroxine binding site.

The protein belongs to the transthyretin family. Homotetramer. Dimer of dimers. In the homotetramer, subunits assemble around a central channel that can accommodate two ligand molecules. Interacts with RBP4. In terms of processing, sulfonation of the reactive cysteine Cys-28 enhances the stability of the native conformation of TTR, avoiding misassembly of the protein leading to amyloid formation.

Its subcellular location is the secreted. In terms of biological role, thyroid hormone-binding protein. Probably transports thyroxine from the bloodstream to the brain. The polypeptide is Transthyretin (TTR) (Erinaceus europaeus (Western European hedgehog)).